A 628-amino-acid polypeptide reads, in one-letter code: Chaperone protein DnaK (628 aa).

Threonine 197 bears the Phosphothreonine; by autocatalysis mark. The span at 595 to 604 (AEAMYKKEQG) shows a compositional bias: basic and acidic residues. Residues 595–628 (AEAMYKKEQGEQAGAQPNQKAKKDDDDVIDAEVE) form a disordered region.

Belongs to the heat shock protein 70 family.

Its function is as follows. Acts as a chaperone. This Aliarcobacter butzleri (strain RM4018) (Arcobacter butzleri) protein is Chaperone protein DnaK.